Consider the following 599-residue polypeptide: Retrotransposon Gag-like protein 5 (599 aa).

Disordered regions lie at residues 77–97 (DPTPEEEEEEEEEVPFLCWPP), 116–139 (DYTNPDGSSDPPLSPSPSQPELHS), and 377–450 (FPQE…EEDE). Positions 78–90 (PTPEEEEEEEEEV) are enriched in acidic residues. 2 stretches are compositionally biased toward acidic residues: residues 393-432 (DEMEDEEDEDEDEDYEFEEEDEDDDDEEEEEEEEEEEDKE) and 439-450 (DSDENKYEEEDE).

This chain is Retrotransposon Gag-like protein 5, found in Mus musculus (Mouse).